Reading from the N-terminus, the 469-residue chain is Soluble pyridine nucleotide transhydrogenase (469 aa).

39–48 is a binding site for FAD; that stretch reads ERENSVGGGC.

This sequence belongs to the class-I pyridine nucleotide-disulfide oxidoreductase family. FAD serves as cofactor.

It is found in the cytoplasm. It carries out the reaction NAD(+) + NADPH = NADH + NADP(+). Functionally, conversion of NADPH, generated by peripheral catabolic pathways, to NADH, which can enter the respiratory chain for energy generation. This Photobacterium profundum (strain SS9) protein is Soluble pyridine nucleotide transhydrogenase.